The primary structure comprises 106 residues: Insulin-like peptide 03 (106 aa).

The N-terminal stretch at 1–18 is a signal peptide; the sequence is MLFYFGLAVIFLIDSSQT. Residues 19–34 constitute a propeptide that is removed on maturation; sequence QTLYKVNEVGGSQVDR. Disulfide bonds link cysteine 37-cysteine 93, cysteine 49-cysteine 106, and cysteine 92-cysteine 97. Positions 52-82 are cleaved as a propeptide — c peptide; it reads KKRQNIPRKYGRDPNNILEKEEFAKRFLRVR.

The protein belongs to the insulin family.

The protein localises to the secreted. Insulin decreases blood glucose concentration. May have evolved to activate insulin receptors (INSR) in vertebrates. Molecular docking studies reveals unique interaction with the human insulin receptor. In vivo, insulin-like peptide injection reduces blood glucose levels in two models of zebrafish diabetes (streptozotocin- and glucose-induced). Also shorter swimming distance of zebrafish larvae, an effect which is not observed with human insulin. The chain is Insulin-like peptide 03 from Exaiptasia diaphana (Tropical sea anemone).